Consider the following 491-residue polypeptide: UDP-N-acetylmuramate--L-alanine ligase (491 aa).

126-132 is a binding site for ATP; it reads GTHGKTT.

This sequence belongs to the MurCDEF family.

It localises to the cytoplasm. The catalysed reaction is UDP-N-acetyl-alpha-D-muramate + L-alanine + ATP = UDP-N-acetyl-alpha-D-muramoyl-L-alanine + ADP + phosphate + H(+). It participates in cell wall biogenesis; peptidoglycan biosynthesis. Functionally, cell wall formation. This Salmonella arizonae (strain ATCC BAA-731 / CDC346-86 / RSK2980) protein is UDP-N-acetylmuramate--L-alanine ligase.